We begin with the raw amino-acid sequence, 98 residues long: Integration host factor subunit alpha (98 aa).

The disordered stretch occupies residues 52 to 71; that stretch reads FDLRDKNQRPGRNPKTGEDI.

This sequence belongs to the bacterial histone-like protein family. In terms of assembly, heterodimer of an alpha and a beta chain.

Functionally, this protein is one of the two subunits of integration host factor, a specific DNA-binding protein that functions in genetic recombination as well as in transcriptional and translational control. This Photorhabdus laumondii subsp. laumondii (strain DSM 15139 / CIP 105565 / TT01) (Photorhabdus luminescens subsp. laumondii) protein is Integration host factor subunit alpha.